We begin with the raw amino-acid sequence, 597 residues long: Aspartate--tRNA ligase (597 aa).

Residue E171 participates in L-aspartate binding. Residues 195–198 (QLFK) are aspartate. R217 provides a ligand contact to L-aspartate. Residues 217 to 219 (RDE) and Q226 contribute to the ATP site. Residue H448 coordinates L-aspartate. Residue E482 coordinates ATP. L-aspartate is bound at residue R489. 534-537 (GLDR) is an ATP binding site.

It belongs to the class-II aminoacyl-tRNA synthetase family. Type 1 subfamily. In terms of assembly, homodimer.

It is found in the cytoplasm. It catalyses the reaction tRNA(Asp) + L-aspartate + ATP = L-aspartyl-tRNA(Asp) + AMP + diphosphate. Its function is as follows. Catalyzes the attachment of L-aspartate to tRNA(Asp) in a two-step reaction: L-aspartate is first activated by ATP to form Asp-AMP and then transferred to the acceptor end of tRNA(Asp). In Photobacterium profundum (strain SS9), this protein is Aspartate--tRNA ligase.